The chain runs to 93 residues: Pyrimidine/purine nucleoside phosphorylase (93 aa).

Belongs to the nucleoside phosphorylase PpnP family.

The catalysed reaction is a purine D-ribonucleoside + phosphate = a purine nucleobase + alpha-D-ribose 1-phosphate. It catalyses the reaction adenosine + phosphate = alpha-D-ribose 1-phosphate + adenine. It carries out the reaction cytidine + phosphate = cytosine + alpha-D-ribose 1-phosphate. The enzyme catalyses guanosine + phosphate = alpha-D-ribose 1-phosphate + guanine. The catalysed reaction is inosine + phosphate = alpha-D-ribose 1-phosphate + hypoxanthine. It catalyses the reaction thymidine + phosphate = 2-deoxy-alpha-D-ribose 1-phosphate + thymine. It carries out the reaction uridine + phosphate = alpha-D-ribose 1-phosphate + uracil. The enzyme catalyses xanthosine + phosphate = alpha-D-ribose 1-phosphate + xanthine. Functionally, catalyzes the phosphorolysis of diverse nucleosides, yielding D-ribose 1-phosphate and the respective free bases. Can use uridine, adenosine, guanosine, cytidine, thymidine, inosine and xanthosine as substrates. Also catalyzes the reverse reactions. This Pseudomonas syringae pv. syringae (strain B728a) protein is Pyrimidine/purine nucleoside phosphorylase.